Here is a 316-residue protein sequence, read N- to C-terminus: Olfactory receptor 10H28 (316 aa).

Over Met-1–Pro-26 the chain is Extracellular. Asn-5 is a glycosylation site (N-linked (GlcNAc...) asparagine). The chain crosses the membrane as a helical span at residues Ala-27 to Met-47. Topologically, residues Ala-48–His-57 are cytoplasmic. Residues Thr-58 to Ile-78 form a helical membrane-spanning segment. At Thr-79 to Asn-100 the chain is on the extracellular side. A disulfide bond links Cys-98 and Cys-190. The helical transmembrane segment at Gln-101 to Tyr-121 threads the bilayer. Residues Asp-122–Arg-144 are Cytoplasmic-facing. The chain crosses the membrane as a helical span at residues Leu-145–Phe-165. The Extracellular segment spans residues His-166–Thr-207. Residues Pro-208–Leu-228 traverse the membrane as a helical segment. At Arg-229–Ser-241 the chain is on the cytoplasmic side. The chain crosses the membrane as a helical span at residues Thr-242–Leu-262. Residues Lys-263–Asp-273 lie on the Extracellular side of the membrane. A helical membrane pass occupies residues Thr-274 to Leu-294. The Cytoplasmic segment spans residues Arg-295 to Ile-316.

The protein belongs to the G-protein coupled receptor 1 family.

Its subcellular location is the cell membrane. In terms of biological role, odorant receptor. In Mus musculus (Mouse), this protein is Olfactory receptor 10H28.